We begin with the raw amino-acid sequence, 194 residues long: Phosphoheptose isomerase (194 aa).

Residues 37–194 form the SIS domain; that stretch reads ISNSFKQGGK…LIEFEMAKQA (158 aa). A substrate-binding site is contributed by 52-54; sequence NGG. His61 and Glu65 together coordinate Zn(2+). Residues Glu65, 93 to 94, 119 to 121, Ser124, and Gln172 each bind substrate; these read ND and STS. Zn(2+) is bound by residues Gln172 and His180.

It belongs to the SIS family. GmhA subfamily. In terms of assembly, homotetramer. Zn(2+) is required as a cofactor.

Its subcellular location is the cytoplasm. The enzyme catalyses 2 D-sedoheptulose 7-phosphate = D-glycero-alpha-D-manno-heptose 7-phosphate + D-glycero-beta-D-manno-heptose 7-phosphate. Its pathway is carbohydrate biosynthesis; D-glycero-D-manno-heptose 7-phosphate biosynthesis; D-glycero-alpha-D-manno-heptose 7-phosphate and D-glycero-beta-D-manno-heptose 7-phosphate from sedoheptulose 7-phosphate: step 1/1. In terms of biological role, catalyzes the isomerization of sedoheptulose 7-phosphate in D-glycero-D-manno-heptose 7-phosphate. The sequence is that of Phosphoheptose isomerase from Haemophilus influenzae (strain PittGG).